Consider the following 209-residue polypeptide: E3 ubiquitin-protein ligase RNF138 (209 aa).

The RING-type zinc-finger motif lies at 18-58; it reads CPVCQEVLKTPVRTAACQHVFCRKCFLTAMRESGIHCPLCR. Zn(2+) is bound by residues cysteine 86, cysteine 89, histidine 101, and cysteine 105. The segment at 86-105 adopts a C2HC RNF-type zinc-finger fold; it reads CRCCSKKIKFYRMRHHYKSC. Residues 125-154 form a disordered region; it reads QDSVRSSNRSETSASDNTETYQEDTSSSGH. Residue threonine 142 is modified to Phosphothreonine. Residues 157 to 180 form a C2H2-type zinc finger; that stretch reads FKCPLCQESNFTRQRLLDHCNSNH. Residues 189–207 enclose the UIM domain; that stretch reads LQLDEETQYQTAVEESFQV.

As to quaternary structure, interacts with NLK. Interacts with XRCC5/Ku80. Interacts with RBBP8/CtIP. Post-translationally, auto-ubiquitinated.

The protein localises to the chromosome. The catalysed reaction is S-ubiquitinyl-[E2 ubiquitin-conjugating enzyme]-L-cysteine + [acceptor protein]-L-lysine = [E2 ubiquitin-conjugating enzyme]-L-cysteine + N(6)-ubiquitinyl-[acceptor protein]-L-lysine.. It participates in protein modification; protein ubiquitination. Functionally, E3 ubiquitin-protein ligase involved in DNA damage response by promoting DNA resection and homologous recombination. Recruited to sites of double-strand breaks following DNA damage and specifically promotes double-strand break repair via homologous recombination. Two different, non-exclusive, mechanisms have been proposed. According to a report, regulates the choice of double-strand break repair by favoring homologous recombination over non-homologous end joining (NHEJ): acts by mediating ubiquitination of XRCC5/Ku80, leading to remove the Ku complex from DNA breaks, thereby promoting homologous recombination. According to another report, cooperates with UBE2Ds E2 ubiquitin ligases (UBE2D1, UBE2D2, UBE2D3 or UBE2D4) to promote homologous recombination by mediating ubiquitination of RBBP8/CtIP. Together with NLK, involved in the ubiquitination and degradation of TCF/LEF. Also exhibits auto-ubiquitination activity in combination with UBE2K. May act as a negative regulator in the Wnt/beta-catenin-mediated signaling pathway. The polypeptide is E3 ubiquitin-protein ligase RNF138 (Rattus norvegicus (Rat)).